The primary structure comprises 405 residues: SPbeta prophage-derived uncharacterized protein YonJ (405 aa).

A coiled-coil region spans residues 72-101 (DESNNSLLELELKKVEIMEERKKLQAVKHE).

In Bacillus subtilis (strain 168), this protein is SPbeta prophage-derived uncharacterized protein YonJ (yonJ).